Here is a 762-residue protein sequence, read N- to C-terminus: Endothelin-converting enzyme 1 (762 aa).

Residues 1 to 60 (MGSLRPPQGLGLQWSSFFLGKKGPGLTVSLPLLASSLQVNFRSPRSGQRCWAARTSVEKR) lie on the Cytoplasmic side of the membrane. A helical; Signal-anchor for type II membrane protein transmembrane segment spans residues 61 to 81 (LVVLVTLLAAGLVACLAALGI). Over 82 to 762 (QYRTRTPPVC…MNPRHKCEVW (681 aa)) the chain is Extracellular. The Peptidase M13 domain occupies 90 to 762 (VCLTEACVSV…MNPRHKCEVW (673 aa)). 5 disulfide bridges follow: Cys91-Cys96, Cys114-Cys747, Cys122-Cys707, Cys177-Cys427, and Cys636-Cys759. N-linked (GlcNAc...) asparagine glycans are attached at residues Asn158, Asn179, Asn202, Asn262, Asn308, Asn354, Asn375, and Asn531. Residue His599 participates in Zn(2+) binding. The active site involves Glu600. Residue His603 coordinates Zn(2+). N-linked (GlcNAc...) asparagine glycans are attached at residues Asn624 and Asn643. Glu659 is a Zn(2+) binding site. Residue Asp663 is the Proton donor of the active site.

It belongs to the peptidase M13 family. As to quaternary structure, homodimer; disulfide-linked. Interacts with PPP1R16B. Interacts with TSPAN8; this interaction recruits the endothelin converting enzyme ECE1 to tetraspanin-enriched microdomains and positively modulates its enzymatic activity. The cofactor is Zn(2+). In terms of tissue distribution, all isoforms are expressed in aortic endothelial cells. Isoform A is also expressed in liver; isoform B in smooth muscle cells and fibroblasts; isoform C in aortic endothelial cells, smooth muscle cells, fibroblasts, liver and lung, and isoform D in smooth muscle cells.

The protein resides in the cell membrane. The catalysed reaction is Hydrolysis of the 21-Trp-|-Val-22 bond in big endothelin to form endothelin 1.. Inhibited by phosphoramidon. In terms of biological role, converts big endothelin-1 to endothelin-1. The protein is Endothelin-converting enzyme 1 (Ece1) of Rattus norvegicus (Rat).